We begin with the raw amino-acid sequence, 136 residues long: MFQSLIAIDYGKARIGIASGQMITKTATPIGTVETYDGVPNWIELDKIIKRWNPSDIIIGLPLDTQNFETDITKSAKDFAKEVQQRYQRKVHLINEAYSTREARWRLEEVKSKKVSHIKVDALAACVILETWMSEN.

It belongs to the YqgF nuclease family.

The protein localises to the cytoplasm. Its function is as follows. Could be a nuclease involved in processing of the 5'-end of pre-16S rRNA. This chain is Putative pre-16S rRNA nuclease, found in Francisella tularensis subsp. tularensis (strain WY96-3418).